The primary structure comprises 317 residues: Ribonuclease H2 subunit A (317 aa).

The RNase H type-2 domain maps to 43–270 (PCCLGVDEAG…AKDMLETKGG (228 aa)). The a divalent metal cation site is built by aspartate 49, glutamate 50, and aspartate 166.

Belongs to the RNase HII family. Eukaryotic subfamily. Mn(2+) serves as cofactor. The cofactor is Mg(2+).

The catalysed reaction is Endonucleolytic cleavage to 5'-phosphomonoester.. Functionally, endonuclease that specifically degrades the RNA of RNA-DNA hybrids. Participates in DNA replication. In Neurospora crassa (strain ATCC 24698 / 74-OR23-1A / CBS 708.71 / DSM 1257 / FGSC 987), this protein is Ribonuclease H2 subunit A (rnh-201).